The chain runs to 235 residues: Carboxy-S-adenosyl-L-methionine synthase (235 aa).

S-adenosyl-L-methionine contacts are provided by residues Tyr-35, 60–62, 83–84, Asn-124, and Arg-191; these read GCS and DN.

Belongs to the class I-like SAM-binding methyltransferase superfamily. Cx-SAM synthase family. As to quaternary structure, homodimer.

The catalysed reaction is prephenate + S-adenosyl-L-methionine = carboxy-S-adenosyl-L-methionine + 3-phenylpyruvate + H2O. Catalyzes the conversion of S-adenosyl-L-methionine (SAM) to carboxy-S-adenosyl-L-methionine (Cx-SAM). The chain is Carboxy-S-adenosyl-L-methionine synthase from Campylobacter jejuni subsp. doylei (strain ATCC BAA-1458 / RM4099 / 269.97).